Here is a 217-residue protein sequence, read N- to C-terminus: Cytidylate kinase (217 aa).

Position 10–18 (10–18 (GPAGAGKST)) interacts with ATP.

Belongs to the cytidylate kinase family. Type 1 subfamily.

It is found in the cytoplasm. The catalysed reaction is CMP + ATP = CDP + ADP. It carries out the reaction dCMP + ATP = dCDP + ADP. The chain is Cytidylate kinase from Clostridium botulinum (strain Okra / Type B1).